The primary structure comprises 228 residues: Urease accessory protein UreG (228 aa).

34–41 provides a ligand contact to GTP; that stretch reads GPVGSGKT.

Belongs to the SIMIBI class G3E GTPase family. UreG subfamily. Homodimer. UreD, UreF and UreG form a complex that acts as a GTP-hydrolysis-dependent molecular chaperone, activating the urease apoprotein by helping to assemble the nickel containing metallocenter of UreC. The UreE protein probably delivers the nickel.

Its subcellular location is the cytoplasm. Facilitates the functional incorporation of the urease nickel metallocenter. This process requires GTP hydrolysis, probably effectuated by UreG. The chain is Urease accessory protein UreG from Rhodococcus opacus (strain B4).